We begin with the raw amino-acid sequence, 34 residues long: Photosystem II reaction center protein M (34 aa).

The helical transmembrane segment at 5–25 (ILAFIATVLFILVPTAFLLII) threads the bilayer.

Belongs to the PsbM family. PSII is composed of 1 copy each of membrane proteins PsbA, PsbB, PsbC, PsbD, PsbE, PsbF, PsbH, PsbI, PsbJ, PsbK, PsbL, PsbM, PsbT, PsbX, PsbY, PsbZ, Psb30/Ycf12, at least 3 peripheral proteins of the oxygen-evolving complex and a large number of cofactors. It forms dimeric complexes.

The protein localises to the plastid. It localises to the chloroplast thylakoid membrane. Its function is as follows. One of the components of the core complex of photosystem II (PSII). PSII is a light-driven water:plastoquinone oxidoreductase that uses light energy to abstract electrons from H(2)O, generating O(2) and a proton gradient subsequently used for ATP formation. It consists of a core antenna complex that captures photons, and an electron transfer chain that converts photonic excitation into a charge separation. This subunit is found at the monomer-monomer interface. In Piper cenocladum (Ant piper), this protein is Photosystem II reaction center protein M.